Here is an 833-residue protein sequence, read N- to C-terminus: Glycerol-3-phosphate acyltransferase (833 aa).

Residues 309-314 (CHRSHI) carry the HXXXXD motif motif.

It belongs to the GPAT/DAPAT family.

The protein resides in the cell inner membrane. The catalysed reaction is sn-glycerol 3-phosphate + an acyl-CoA = a 1-acyl-sn-glycero-3-phosphate + CoA. It participates in phospholipid metabolism; CDP-diacylglycerol biosynthesis; CDP-diacylglycerol from sn-glycerol 3-phosphate: step 1/3. This chain is Glycerol-3-phosphate acyltransferase, found in Pseudomonas savastanoi pv. phaseolicola (strain 1448A / Race 6) (Pseudomonas syringae pv. phaseolicola (strain 1448A / Race 6)).